The sequence spans 149 residues: Cell division protein SepF (149 aa).

A disordered region spans residues 12–57 (SNEEDDYYEEDGYEQSQQQEQQTTQQTSSQPRFVRQTTQSQTPAGL). Positions 13-24 (NEEDDYYEEDGY) are enriched in acidic residues. Low complexity predominate over residues 25 to 41 (EQSQQQEQQTTQQTSSQ). The span at 46 to 57 (RQTTQSQTPAGL) shows a compositional bias: polar residues.

The protein belongs to the SepF family. As to quaternary structure, homodimer. Interacts with FtsZ.

It is found in the cytoplasm. Functionally, cell division protein that is part of the divisome complex and is recruited early to the Z-ring. Probably stimulates Z-ring formation, perhaps through the cross-linking of FtsZ protofilaments. Its function overlaps with FtsA. The protein is Cell division protein SepF of Leuconostoc mesenteroides subsp. mesenteroides (strain ATCC 8293 / DSM 20343 / BCRC 11652 / CCM 1803 / JCM 6124 / NCDO 523 / NBRC 100496 / NCIMB 8023 / NCTC 12954 / NRRL B-1118 / 37Y).